The following is a 350-amino-acid chain: Serine/threonine-protein kinase SRK2F (350 aa).

In terms of domain architecture, Protein kinase spans 4–260 (YDILRDLGSG…VPEIEKHPWF (257 aa)). ATP is bound by residues 10–18 (LGSGNFGVA) and Lys33. Asp123 functions as the Proton acceptor in the catalytic mechanism. Residues 270-303 (EEEKCDNGVEEEEEEEEKCRQSVEEIVKIIEEAR) are a coiled coil.

It belongs to the protein kinase superfamily. Ser/Thr protein kinase family. In terms of tissue distribution, expressed in seedlings.

The catalysed reaction is L-seryl-[protein] + ATP = O-phospho-L-seryl-[protein] + ADP + H(+). It catalyses the reaction L-threonyl-[protein] + ATP = O-phospho-L-threonyl-[protein] + ADP + H(+). The protein is Serine/threonine-protein kinase SRK2F (SRK2F) of Arabidopsis thaliana (Mouse-ear cress).